A 298-amino-acid polypeptide reads, in one-letter code: Bifunctional protein FolD (298 aa).

NADP(+)-binding positions include glycine 165 to serine 167, serine 190, and isoleucine 231.

It belongs to the tetrahydrofolate dehydrogenase/cyclohydrolase family. In terms of assembly, homodimer.

The enzyme catalyses (6R)-5,10-methylene-5,6,7,8-tetrahydrofolate + NADP(+) = (6R)-5,10-methenyltetrahydrofolate + NADPH. It catalyses the reaction (6R)-5,10-methenyltetrahydrofolate + H2O = (6R)-10-formyltetrahydrofolate + H(+). The protein operates within one-carbon metabolism; tetrahydrofolate interconversion. Catalyzes the oxidation of 5,10-methylenetetrahydrofolate to 5,10-methenyltetrahydrofolate and then the hydrolysis of 5,10-methenyltetrahydrofolate to 10-formyltetrahydrofolate. The chain is Bifunctional protein FolD from Prochlorococcus marinus (strain AS9601).